Reading from the N-terminus, the 445-residue chain is Tubulin alpha-3 chain (445 aa).

GTP-binding residues include Gln-11, Glu-72, Ser-141, Gly-145, Thr-146, Thr-180, Asn-207, and Asn-229. Glu-72 is a Mg(2+) binding site. The active site involves Glu-255.

This sequence belongs to the tubulin family. In terms of assembly, dimer of alpha and beta chains. A typical microtubule is a hollow water-filled tube with an outer diameter of 25 nm and an inner diameter of 15 nM. Alpha-beta heterodimers associate head-to-tail to form protofilaments running lengthwise along the microtubule wall with the beta-tubulin subunit facing the microtubule plus end conferring a structural polarity. Microtubules usually have 13 protofilaments but different protofilament numbers can be found in some organisms and specialized cells. Interacts with NUM1. Mg(2+) serves as cofactor.

The protein localises to the cytoplasm. It is found in the cytoskeleton. It catalyses the reaction GTP + H2O = GDP + phosphate + H(+). Its function is as follows. Tubulin is the major constituent of microtubules, a cylinder consisting of laterally associated linear protofilaments composed of alpha- and beta-tubulin heterodimers. Microtubules grow by the addition of GTP-tubulin dimers to the microtubule end, where a stabilizing cap forms. Below the cap, tubulin dimers are in GDP-bound state, owing to GTPase activity of alpha-tubulin. This Saccharomyces cerevisiae (strain ATCC 204508 / S288c) (Baker's yeast) protein is Tubulin alpha-3 chain (TUB3).